The primary structure comprises 257 residues: Regulator of G-protein signaling 7-binding protein (257 aa).

The tract at residues 1 to 45 (MSSAPNGRKKRPSRSTRSSIFQISKPPLQTGDWERRGSGSESAHK) is disordered. Residues 32–45 (DWERRGSGSESAHK) show a composition bias toward basic and acidic residues. Residues 242-247 (RRRKRR) carry the Nuclear localization signal motif. S-palmitoyl cysteine attachment occurs at residues cysteine 252 and cysteine 253.

Belongs to the RGS7BP/RGS9BP family. Interacts with 'R7' family proteins RGS6, RGS7, RGS9 and RGS11. Component of some R7-Gbeta5 complex composed of some R7 protein (RGS6, RGS7, RGS9 or RGS11), Gbeta5 (GNB5) and RGS7BP. Post-translationally, palmitoylated. Undergoes rapid palmitoylation turnover. De novo and turnover palmitoylation are both mediated by ZDHHC2. Palmitoylation regulates the cell membrane and nuclear shuttling and the regulation of GPCR signaling. Upon depalmitoylation, it is targeted from the plasma membrane into the nucleus. GPCR signaling inhibits depalmitoylation and promotes localization to the plasma membrane.

The protein localises to the nucleus. It localises to the cytoplasm. Its subcellular location is the cell membrane. Its function is as follows. Regulator of G protein-coupled receptor (GPCR) signaling. Regulatory subunit of the R7-Gbeta5 complexes that acts by controlling the subcellular location of the R7-Gbeta5 complexes. When palmitoylated, it targets the R7-Gbeta5 complexes to the plasma membrane, leading to inhibit G protein alpha subunits. When it is unpalmitoylated, the R7-Gbeta5 complexes undergo a nuclear/cytoplasmic shuttling. May also act by controlling the proteolytic stability of R7 proteins, probably by protecting them from degradation. The polypeptide is Regulator of G-protein signaling 7-binding protein (RGS7BP) (Bos taurus (Bovine)).